Consider the following 318-residue polypeptide: Acetyl-coenzyme A carboxylase carboxyl transferase subunit alpha (318 aa).

In terms of domain architecture, CoA carboxyltransferase C-terminal spans Asp34–Glu295.

The protein belongs to the AccA family. As to quaternary structure, acetyl-CoA carboxylase is a heterohexamer composed of biotin carboxyl carrier protein (AccB), biotin carboxylase (AccC) and two subunits each of ACCase subunit alpha (AccA) and ACCase subunit beta (AccD).

It localises to the cytoplasm. The enzyme catalyses N(6)-carboxybiotinyl-L-lysyl-[protein] + acetyl-CoA = N(6)-biotinyl-L-lysyl-[protein] + malonyl-CoA. It functions in the pathway lipid metabolism; malonyl-CoA biosynthesis; malonyl-CoA from acetyl-CoA: step 1/1. Functionally, component of the acetyl coenzyme A carboxylase (ACC) complex. First, biotin carboxylase catalyzes the carboxylation of biotin on its carrier protein (BCCP) and then the CO(2) group is transferred by the carboxyltransferase to acetyl-CoA to form malonyl-CoA. This chain is Acetyl-coenzyme A carboxylase carboxyl transferase subunit alpha, found in Colwellia psychrerythraea (strain 34H / ATCC BAA-681) (Vibrio psychroerythus).